A 536-amino-acid chain; its full sequence is ATP synthase subunit alpha, mitochondrial (536 aa).

Residues methionine 1 to tyrosine 27 constitute a mitochondrion transit peptide. ATP is bound at residue glycine 197–threonine 204.

Belongs to the ATPase alpha/beta chains family. In terms of assembly, F-type ATPases have 2 components, CF(1) - the catalytic core - and CF(0) - the membrane proton channel. CF(1) has five subunits: alpha(3), beta(3), gamma(1), delta(1), epsilon(1). CF(0) has three main subunits: a, b and c.

The protein localises to the mitochondrion. Its subcellular location is the mitochondrion inner membrane. In terms of biological role, mitochondrial membrane ATP synthase (F(1)F(0) ATP synthase or Complex V) produces ATP from ADP in the presence of a proton gradient across the membrane which is generated by electron transport complexes of the respiratory chain. F-type ATPases consist of two structural domains, F(1) - containing the extramembraneous catalytic core, and F(0) - containing the membrane proton channel, linked together by a central stalk and a peripheral stalk. During catalysis, ATP synthesis in the catalytic domain of F(1) is coupled via a rotary mechanism of the central stalk subunits to proton translocation. Subunits alpha and beta form the catalytic core in F(1). Rotation of the central stalk against the surrounding alpha(3)beta(3) subunits leads to hydrolysis of ATP in three separate catalytic sites on the beta subunits. Subunit alpha does not bear the catalytic high-affinity ATP-binding sites. The chain is ATP synthase subunit alpha, mitochondrial (atp1) from Schizosaccharomyces pombe (strain 972 / ATCC 24843) (Fission yeast).